The following is an 87-amino-acid chain: Selenoprotein W (87 aa).

Residues 10-13 (CGAU) constitute a cross-link (cysteinyl-selenocysteine (Cys-Sec); redox-active). Position 13 (selenocysteine 13) is a non-standard amino acid, selenocysteine. Position 37 is an S-glutathionyl cysteine (cysteine 37).

Belongs to the SelWTH family. Selenoprotein W subfamily. In terms of assembly, interacts with DPYSL2, PRDX1, YWHAB, YWHAG, HSP70 and HSP90. As to expression, detected in muscle, heart, tongue, brain, lung, spleen, kidney and liver. Highest levels expressed in muscle and heart whereas lowest levels detected in liver (at protein level).

Its subcellular location is the cytoplasm. In terms of biological role, plays a role as a glutathione (GSH)-dependent antioxidant. May be involved in a redox-related process. May play a role in the myopathies of selenium deficiency. The protein is Selenoprotein W of Ovis aries (Sheep).